A 2524-amino-acid chain; its full sequence is Neurogenic locus notch homolog protein 1 (2524 aa).

A signal peptide spans 1 to 19; the sequence is MDRIGLAVLLCSLPVLTQG. EGF-like domains lie at 20–57, 58–99, 102–140, and 141–177; these read LRCT…ERCQ, FPNP…KVCL, VDNA…DSCQ, and QADP…ATCK. At 20–1729 the chain is on the extracellular side; the sequence is LRCTQTAEMC…METPKPSTLY (1710 aa). Disulfide bonds link Cys-22–Cys-35, Cys-29–Cys-45, Cys-47–Cys-56, Cys-62–Cys-74, Cys-68–Cys-87, Cys-89–Cys-98, Cys-106–Cys-117, Cys-111–Cys-128, Cys-130–Cys-139, Cys-145–Cys-156, Cys-150–Cys-165, Cys-167–Cys-176, Cys-183–Cys-194, Cys-188–Cys-203, Cys-205–Cys-214, Cys-221–Cys-232, Cys-226–Cys-242, Cys-244–Cys-253, Cys-260–Cys-271, Cys-265–Cys-280, Cys-282–Cys-291, Cys-298–Cys-311, Cys-305–Cys-320, Cys-322–Cys-331, Cys-338–Cys-349, Cys-343–Cys-358, Cys-360–Cys-369, Cys-375–Cys-386, Cys-380–Cys-397, Cys-399–Cys-408, Cys-415–Cys-428, Cys-422–Cys-437, and Cys-439–Cys-448. The EGF-like 5; calcium-binding domain maps to 179–215; sequence DINECSQNPCKNGGQCINEFGSYRCTCQNRFTGRNCD. One can recognise an EGF-like 6 domain in the interval 217-254; the sequence is PYVPCNPSPCLNGGTCRQTDDTSYDCTCLPGFSGQNCE. Thr-231 is a glycosylation site (O-linked (Fuc...) threonine; alternate). A glycan (O-linked (GalNAc...) threonine; alternate) is linked at Thr-231. The 37-residue stretch at 256-292 folds into the EGF-like 7; calcium-binding domain; that stretch reads NIDDCPSNNCRNGGTCVDGVNTYNCQCPPDWTGQYCT. One can recognise an EGF-like 8; calcium-binding domain in the interval 294 to 332; that stretch reads DVDECQLMPNACQNGGTCHNTYGGYNCVCVNGWTGEDCS. An EGF-like 9; calcium-binding domain is found at 334–370; sequence NIDDCANAACHSGATCHDRVASFYCECPHGRTGLLCH. In terms of domain architecture, EGF-like 10 spans 371-409; it reads LDNACISNPCNEGSNCDTNPVNGKAICTCPPGYTGPACN. The 39-residue stretch at 411-449 folds into the EGF-like 11; calcium-binding domain; the sequence is DVDECSLGANPCEHGGRCTNTLGSFQCNCPQGYAGPRCE. Ca(2+) contacts are provided by Thr-431 and Ser-434. Ser-434 carries an O-linked (Glc...) serine glycan. Residues Asp-451, Val-452, and Glu-454 each coordinate Ca(2+). The region spanning 451–487 is the EGF-like 12; calcium-binding domain; that stretch reads DVNECLSNPCQNDSTCLDQIGEFQCICMPGYEGLYCE. 3 disulfide bridges follow: Cys-455-Cys-466, Cys-460-Cys-475, and Cys-477-Cys-486. Residue Ser-457 is glycosylated (O-linked (Glc...) serine). Asn-462 carries an N-linked (GlcNAc...) asparagine glycan. Thr-465 is a glycosylation site (O-linked (Fuc...) threonine). Residues Asp-468 and Gln-469 each contribute to the Ca(2+) site. The Ca(2+) site is built by Asn-489, Ile-490, and Glu-492. The EGF-like 13; calcium-binding domain maps to 489-525; it reads NIDECASNPCLHNGKCIDKINEFRCDCPTGFSGNLCQ. 75 disulfides stabilise this stretch: Cys-493/Cys-504, Cys-498/Cys-513, Cys-515/Cys-524, Cys-531/Cys-542, Cys-536/Cys-551, Cys-553/Cys-562, Cys-569/Cys-579, Cys-574/Cys-588, Cys-590/Cys-599, Cys-606/Cys-617, Cys-611/Cys-626, Cys-628/Cys-637, Cys-644/Cys-654, Cys-649/Cys-663, Cys-665/Cys-674, Cys-681/Cys-692, Cys-686/Cys-701, Cys-703/Cys-712, Cys-719/Cys-729, Cys-724/Cys-738, Cys-740/Cys-749, Cys-756/Cys-767, Cys-761/Cys-776, Cys-778/Cys-787, Cys-794/Cys-805, Cys-799/Cys-814, Cys-816/Cys-825, Cys-832/Cys-843, Cys-837/Cys-854, Cys-856/Cys-865, Cys-872/Cys-883, Cys-877/Cys-892, Cys-894/Cys-903, Cys-910/Cys-921, Cys-915/Cys-930, Cys-932/Cys-941, Cys-948/Cys-959, Cys-953/Cys-968, Cys-970/Cys-979, Cys-986/Cys-997, Cys-991/Cys-1006, Cys-1008/Cys-1017, Cys-1024/Cys-1035, Cys-1029/Cys-1044, Cys-1046/Cys-1055, Cys-1062/Cys-1073, Cys-1067/Cys-1082, Cys-1084/Cys-1093, Cys-1100/Cys-1121, Cys-1115/Cys-1130, Cys-1132/Cys-1141, Cys-1148/Cys-1159, Cys-1153/Cys-1168, Cys-1170/Cys-1179, Cys-1186/Cys-1197, Cys-1191/Cys-1206, Cys-1208/Cys-1217, Cys-1224/Cys-1243, Cys-1237/Cys-1252, Cys-1254/Cys-1263, Cys-1270/Cys-1283, Cys-1275/Cys-1292, Cys-1294/Cys-1303, Cys-1310/Cys-1321, Cys-1315/Cys-1333, Cys-1335/Cys-1344, Cys-1351/Cys-1362, Cys-1356/Cys-1371, Cys-1373/Cys-1382, Cys-1390/Cys-1401, Cys-1395/Cys-1412, Cys-1414/Cys-1423, Cys-1447/Cys-1470, Cys-1452/Cys-1465, and Cys-1461/Cys-1477. An O-linked (Glc...) serine glycan is attached at Ser-495. 2 residues coordinate Ca(2+): Asp-506 and Lys-507. One can recognise an EGF-like 14; calcium-binding domain in the interval 527 to 563; sequence DFDECTSTPCKNGAKCLDGPNSYTCQCTEGFTGRHCE. The region spanning 565-600 is the EGF-like 15; calcium-binding domain; it reads DINECIPDPCHYGTCKDGIATFTCLCRPGYTGRLCD. Residues 602–638 enclose the EGF-like 16; calcium-binding domain; sequence DINECLSKPCLNGGQCTDRENGYICTCPKGTTGVNCE. In terms of domain architecture, EGF-like 17 spans 640-675; sequence KIDDCASNLCDNGKCIDKIDGYECTCEPGYTGKLCN. The region spanning 677 to 713 is the EGF-like 18; calcium-binding domain; the sequence is NINECDSNPCRNGGTCKDQINGFTCVCPDGYHDHMCL. The EGF-like 19; calcium-binding domain occupies 715–750; it reads EVNECNSNPCIHGACHDGVNGYKCDCEAGWSGSNCD. Residues 752–788 enclose the EGF-like 20; calcium-binding domain; that stretch reads NNNECESNPCMNGGTCKDMTGAYICTCKAGFSGPNCQ. The EGF-like 21; calcium-binding domain maps to 790–826; that stretch reads NINECSSNPCLNHGTCIDDVAGYKCNCMLPYTGAICE. One can recognise an EGF-like 22 domain in the interval 828–866; sequence VLAPCAGSPCKNGGRCKESEDFETFSCECPPGWQGQTCE. The EGF-like 23; calcium-binding domain occupies 868 to 904; that stretch reads DMNECVNRPCRNGATCQNTNGSYKCNCKPGYTGRNCE. N-linked (GlcNAc...) asparagine glycosylation is present at Asn-887. The 37-residue stretch at 906 to 942 folds into the EGF-like 24; calcium-binding domain; it reads DIDDCQPNPCHNGGSCSDGINMFFCNCPAGFRGPKCE. The 37-residue stretch at 944 to 980 folds into the EGF-like 25; calcium-binding domain; that stretch reads DINECASNPCKNGANCTDCVNSYTCTCQPGFSGIHCE. A glycan (N-linked (GlcNAc...) asparagine) is linked at Asn-958. One can recognise an EGF-like 26 domain in the interval 982–1018; sequence NTPDCTESSCFNGGTCIDGINTFTCQCPPGFTGSYCQ. The EGF-like 27; calcium-binding domain occupies 1020–1056; it reads DINECDSKPCLNGGTCQDSYGTYKCTCPQGYTGLNCQ. EGF-like domains lie at 1058-1094 and 1096-1142; these read LVRW…VYCD and PSVS…SYCE. The 37-residue stretch at 1144–1180 folds into the EGF-like 30; calcium-binding domain; it reads QVDECSPNPCQNGATCTDYLGGYSCECVAGYHGVNCS. Asn-1178 carries an N-linked (GlcNAc...) asparagine glycan. In terms of domain architecture, EGF-like 31; calcium-binding spans 1182–1218; sequence EINECLSHPCQNGGTCIDLINTYKCSCPRGTQGVHCE. Positions 1220–1264 constitute an EGF-like 32; calcium-binding domain; the sequence is NVDDCTPFYDSFTLEPKCFNNGKCIDRVGGYNCICPPGFVGERCE. EGF-like domains are found at residues 1266–1304, 1306–1346, 1347–1383, and 1386–1424; these read DVNE…RRCE, VVDG…TCEY, DSRT…ATCQ, and VISP…LFCH. The O-linked (Fuc...) threonine; alternate glycan is linked to Thr-1400. An O-linked (GalNAc...) threonine; alternate glycan is attached at Thr-1400. LNR repeat units follow at residues 1447-1487, 1488-1529, and 1530-1564; these read CENE…PWKN, CTQS…CNPL, and YDQY…NMPE. N-linked (GlcNAc...) asparagine glycosylation occurs at Asn-1487. 5 disulfide bridges follow: Cys-1488/Cys-1512, Cys-1494/Cys-1507, Cys-1503/Cys-1519, Cys-1534/Cys-1547, and Cys-1543/Cys-1559. Asn-1508 carries an N-linked (GlcNAc...) asparagine glycan. Asn-1584 carries an N-linked (GlcNAc...) asparagine glycan. The helical transmembrane segment at 1730–1750 threads the bilayer; it reads PMLSMLVIPLLIIFVFMMVIV. The Cytoplasmic segment spans residues 1751–2524; sequence NKKRRREHGQ…QRTHIPEAFK (774 aa). 6 ANK repeats span residues 1876 to 1919, 1924 to 1953, 1957 to 1987, 1991 to 2020, 2024 to 2053, and 2057 to 2086; these read DGFT…QLHN, TGET…DANV, MGRT…DLDA, DGTT…DVNA, FGKS…NKDM, and KEET…NRDI. Disordered regions lie at residues 2144–2230, 2369–2407, and 2451–2524; these read NMKP…LNHL, MQAQ…FCSS, and LTPP…EAFK. 2 stretches are compositionally biased toward polar residues: residues 2180-2192 and 2208-2230; these read GKTT…SSGV and DVSS…LNHL. A compositionally biased stretch (low complexity) spans 2369–2394; sequence MQAQQMQQQQNLQLHQSMQQQHHNSS. Polar residues-rich tracts occupy residues 2395–2407 and 2451–2471; these read TTST…FCSS and LTPP…SHQL. Residues 2481-2496 are compositionally biased toward low complexity; it reads PSPESPDQWSSSSPHS. The segment covering 2497–2516 has biased composition (polar residues); it reads NMSDWSEGISSPPTSMQPQR.

Belongs to the NOTCH family. As to quaternary structure, forms a ternary complex with nrarp and rbpj/suh. Post-translationally, O-glycosylated on the EGF-like domains. Contains both O-linked fucose and O-linked glucose. O-linked glycosylation by galnt11 is involved in determination of left/right symmetry: glycosylation promotes activation of notch1, possibly by promoting cleavage by adam17, modulating the balance between motile and immotile (sensory) cilia at the left-right organiser (LRO). In terms of processing, synthesized in the endoplasmic reticulum as an inactive form which is proteolytically cleaved by a furin-like convertase in the trans-Golgi network before it reaches the plasma membrane to yield an active, ligand-accessible form. Cleavage results in a C-terminal fragment N(TM) and a N-terminal fragment N(EC). Following ligand binding, it is cleaved by adam17 to yield a membrane-associated intermediate fragment called notch extracellular truncation (NEXT). Following endocytosis, this fragment is then cleaved by presenilin dependent gamma-secretase to release a Notch-derived peptide containing the intracellular domain (NICD) from the membrane.

The protein resides in the cell membrane. The protein localises to the nucleus. Its function is as follows. Functions as a receptor for membrane-bound ligands Jagged-1 (JAG1), Jagged-2 (JAG2) and Delta-1 (DLL1) to regulate cell-fate determination. Upon ligand activation through the released notch intracellular domain (NICD) it forms a transcriptional activator complex with RBPJ/RBPSUH and activates genes of the enhancer of split locus. Affects the implementation of differentiation, proliferation and apoptotic programs. Involved in angiogenesis; negatively regulates endothelial cell proliferation and migration and angiogenic sprouting. Involved in the maturation of both CD4(+) and CD8(+) cells in the thymus. Important for follicular differentiation and possibly cell fate selection within the follicle. During cerebellar development, functions as a receptor for neuronal DNER and is involved in the differentiation of Bergmann glia. Represses neuronal and myogenic differentiation. May play an essential role in postimplantation development, probably in some aspect of cell specification and/or differentiation. May be involved in mesoderm development, somite formation and neurogenesis. Involved in determination of left/right symmetry by modulating the balance between motile and immotile (sensory) cilia at the left-right organiser (LRO). This chain is Neurogenic locus notch homolog protein 1 (notch1), found in Xenopus laevis (African clawed frog).